A 1114-amino-acid chain; its full sequence is Filamentous growth regulator 23 (1114 aa).

Positions 1–21 (MFASYLLLVLWIIRLVPTTHA) are cleaved as a signal peptide. Disordered regions lie at residues 232–256 (GSETFVPPTTAPKPVETPSPEPSTT) and 284–314 (SSSIEFSTSTQESSSIGPSSSSSIGSCTSSS). Pro residues predominate over residues 240-252 (TTAPKPVETPSPE). Residues Asn382, Asn397, Asn475, Asn490, Asn506, Asn539, Asn565, Asn591, Asn637, Asn687, and Asn739 are each glycosylated (N-linked (GlcNAc...) asparagine). Residues 392–430 (SETTTNESSSYTDEPSSSEEITNTYEPSSSTESSTTDQF) form a disordered region. Residues 764–784 (TSTLTSSHTSDNEKPASLSSS) are disordered. N-linked (GlcNAc...) asparagine glycosylation occurs at Asn831. Composition is skewed to low complexity over residues 844-910 (SASS…SSSS) and 922-941 (SSSVSSTSSTTSSPSTESSS). Residues 844–963 (SASSSYHSSE…ANENTSEITT (120 aa)) form a disordered region. A compositionally biased stretch (polar residues) spans 942-963 (NGLVSTVTESSTANENTSEITT). Residues Asn957, Asn966, and Asn1070 are each glycosylated (N-linked (GlcNAc...) asparagine). Asn1089 carries GPI-anchor amidated asparagine lipidation. The propeptide at 1090-1114 (ANSLGLKNGDNSWIIGIMMIGLLMI) is removed in mature form.

It localises to the cell membrane. Its function is as follows. Putative adhesin which may be involved in cell adhesion and virulence. Involved in the regulation of filamentous growth. This Candida albicans (strain SC5314 / ATCC MYA-2876) (Yeast) protein is Filamentous growth regulator 23 (FGR23).